The chain runs to 618 residues: Protease 4 (618 aa).

The Cytoplasmic portion of the chain corresponds to M1–E24. Residues M25–V45 form a helical membrane-spanning segment. At S46–R618 the chain is on the periplasmic side. K209 (proton donor/acceptor) is an active-site residue. The active-site Nucleophile is the S409.

The protein belongs to the peptidase S49 family. Homotetramer.

Its subcellular location is the cell inner membrane. Its activity is regulated as follows. Inhibited by serine hydrolase inhibitor FP-biotin and by antipain. Functionally, digests cleaved signal peptides in vitro, its in vivo function is unknown. This activity is necessary to maintain proper secretion of mature proteins across the membrane. This Escherichia coli (strain K12) protein is Protease 4 (sppA).